We begin with the raw amino-acid sequence, 428 residues long: Kynureninase (428 aa).

Residues Thr-104, Thr-105, 132-135, Asp-213, His-216, and Tyr-238 contribute to the pyridoxal 5'-phosphate site; that span reads FPSD. Lys-239 is modified (N6-(pyridoxal phosphate)lysine). Pyridoxal 5'-phosphate is bound by residues Trp-267 and Thr-295.

The protein belongs to the kynureninase family. As to quaternary structure, homodimer. Pyridoxal 5'-phosphate serves as cofactor.

It carries out the reaction L-kynurenine + H2O = anthranilate + L-alanine + H(+). The enzyme catalyses 3-hydroxy-L-kynurenine + H2O = 3-hydroxyanthranilate + L-alanine + H(+). It functions in the pathway amino-acid degradation; L-kynurenine degradation; L-alanine and anthranilate from L-kynurenine: step 1/1. Its pathway is cofactor biosynthesis; NAD(+) biosynthesis; quinolinate from L-kynurenine: step 2/3. Catalyzes the cleavage of L-kynurenine (L-Kyn) and L-3-hydroxykynurenine (L-3OHKyn) into anthranilic acid (AA) and 3-hydroxyanthranilic acid (3-OHAA), respectively. The polypeptide is Kynureninase (Bacillus thuringiensis subsp. konkukian (strain 97-27)).